A 151-amino-acid polypeptide reads, in one-letter code: Small ribosomal subunit protein uS15 (151 aa).

Belongs to the universal ribosomal protein uS15 family.

The protein is Small ribosomal subunit protein uS15 (RPS13) of Agaricus bisporus (White button mushroom).